The following is a 147-amino-acid chain: Basic phospholipase A2 beta-bungarotoxin A1 chain (147 aa).

Positions 1–19 (MNPAHLLVLSAVCVSLLGA) are cleaved as a signal peptide. A propeptide spanning residues 20-27 (ANIPPHPL) is cleaved from the precursor. Intrachain disulfides connect Cys-54–Cys-146, Cys-56–Cys-72, Cys-71–Cys-127, Cys-78–Cys-120, Cys-88–Cys-113, and Cys-106–Cys-118. Ca(2+) is bound by residues Tyr-55, Gly-57, and Gly-59. His-75 is a catalytic residue. Residue Asp-76 participates in Ca(2+) binding. Residue Asp-121 is part of the active site.

The protein belongs to the phospholipase A2 family. Group I subfamily. D49 sub-subfamily. In terms of assembly, heterodimer; disulfide-linked. The A chains have phospholipase A2 activity and the B chains show homology with the basic protease inhibitors. The A1 chain is found in beta-1 and beta-2 bungarotoxins. Ca(2+) is required as a cofactor. Expressed by the venom gland.

It localises to the secreted. It catalyses the reaction a 1,2-diacyl-sn-glycero-3-phosphocholine + H2O = a 1-acyl-sn-glycero-3-phosphocholine + a fatty acid + H(+). In terms of biological role, snake venom phospholipase A2 (PLA2) that inhibits neuromuscular transmission by blocking acetylcholine release from the nerve termini. PLA2 catalyzes the calcium-dependent hydrolysis of the 2-acyl groups in 3-sn-phosphoglycerides. This chain is Basic phospholipase A2 beta-bungarotoxin A1 chain, found in Bungarus multicinctus (Many-banded krait).